A 797-amino-acid chain; its full sequence is MAALAYNLGKREINHYFSVRSAKVLALVAVLLLAACHLASRRYRGNDSCEYLLSSGRFLGEKVWQPHSCMMHKYKISEAKNCLVDKHIAFIGDSRIRQLFYSFVKIINPQFKEEGNKHENIPFEDKTASVKVDFLWHPEVNGSMKQCIKVWTEDSIAKPHVIVAGAATWSIKIHNGSSEALSQYKMNITSIAPLLEKLAKTSDVYWVLQDPVYEDLLSENRKMITNEKIDAYNEAAVSILNSSTRNSKSNVKMFSVSKLIAQETIMESLDGLHLPESSRETTAMILMNVYCNKILKPVDGSCCQPRPPVTLIQKLAACFFTLSIIGYLIFYIIHRNAHRKNKPCTDLESGEEKKNIINTPVSSLEILLQSFCKLGLIMAYFYMCDRANLFMKENKFYTHSSFFIPIIYILVLGVFYNENTKETKVLNREQTDEWKGWMQLVILIYHISGASTFLPVYMHIRVLVAAYLFQTGYGHFSYFWIKGDFGIYRVCQVLFRLNFLVVVLCIVMDRPYQFYYFVPLVTVWFMVIYVTLALWPQIIQKKANGNCFWHFGLLLKLGFLLLFICFLAYSQGAFEKIFSLWPLSKCFELKGNVYEWWFRWRLDRYVVFHGMLFAFIYLALQKRQILSEGKGEPLFSNKISNFLLFISVVSFLTYSIWASSCKNKAECNELHPSVSVVQILAFILIRNIPGYARSVYSSFFAWFGKISLELFICQYHIWLAADTRGILVLIPGNPMLNIIVSTFIFVCVAHEISQITNDLAQIIIPKDNSSLLKRLACIAAFFCGLLILSSIQDKSKH.

At 1–18 (MAALAYNLGKREINHYFS) the chain is on the cytoplasmic side. Residues 19–39 (VRSAKVLALVAVLLLAACHLA) form a helical membrane-spanning segment. Residues 40–313 (SRRYRGNDSC…QPRPPVTLIQ (274 aa)) are Lumenal-facing. An N-linked (GlcNAc...) asparagine glycan is attached at N46. S94 serves as the catalytic Acyl-ester intermediate. N175 and N187 each carry an N-linked (GlcNAc...) asparagine glycan. Residues D270 and H273 contribute to the active site. The chain crosses the membrane as a helical span at residues 314–334 (KLAACFFTLSIIGYLIFYIIH). The Cytoplasmic segment spans residues 335–363 (RNAHRKNKPCTDLESGEEKKNIINTPVSS). The chain crosses the membrane as a helical span at residues 364 to 384 (LEILLQSFCKLGLIMAYFYMC). Residues 385–395 (DRANLFMKENK) lie on the Lumenal side of the membrane. The chain crosses the membrane as a helical span at residues 396–416 (FYTHSSFFIPIIYILVLGVFY). Residues 417–439 (NENTKETKVLNREQTDEWKGWMQ) are Cytoplasmic-facing. A helical membrane pass occupies residues 440-460 (LVILIYHISGASTFLPVYMHI). Residue R461 is a topological domain, lumenal. Residues 462–482 (VLVAAYLFQTGYGHFSYFWIK) form a helical membrane-spanning segment. Over 483 to 486 (GDFG) the chain is Cytoplasmic. Residues 487 to 507 (IYRVCQVLFRLNFLVVVLCIV) traverse the membrane as a helical segment. Over 508 to 513 (MDRPYQ) the chain is Lumenal. A helical membrane pass occupies residues 514–534 (FYYFVPLVTVWFMVIYVTLAL). Over 535–547 (WPQIIQKKANGNC) the chain is Cytoplasmic. The helical transmembrane segment at 548-568 (FWHFGLLLKLGFLLLFICFLA) threads the bilayer. Over 569–605 (YSQGAFEKIFSLWPLSKCFELKGNVYEWWFRWRLDRY) the chain is Lumenal. A helical transmembrane segment spans residues 606–626 (VVFHGMLFAFIYLALQKRQIL). The Cytoplasmic portion of the chain corresponds to 627–638 (SEGKGEPLFSNK). The helical transmembrane segment at 639-659 (ISNFLLFISVVSFLTYSIWAS) threads the bilayer. Topologically, residues 660-671 (SCKNKAECNELH) are lumenal. A helical membrane pass occupies residues 672 to 692 (PSVSVVQILAFILIRNIPGYA). Residues 693-698 (RSVYSS) are Cytoplasmic-facing. Residues 699–719 (FFAWFGKISLELFICQYHIWL) form a helical membrane-spanning segment. Residues 720–725 (AADTRG) are Lumenal-facing. A helical membrane pass occupies residues 726 to 746 (ILVLIPGNPMLNIIVSTFIFV). The Cytoplasmic segment spans residues 747–770 (CVAHEISQITNDLAQIIIPKDNSS). The chain crosses the membrane as a helical span at residues 771–791 (LLKRLACIAAFFCGLLILSSI). Residues 792–797 (QDKSKH) lie on the Lumenal side of the membrane.

The protein belongs to the PC-esterase family. CASD1 subfamily. N-glycosylated. As to expression, highly expressed in peripheral B lymphocytes.

It localises to the golgi apparatus membrane. The enzyme catalyses CMP-N-acetyl-beta-neuraminate + acetyl-CoA = CMP-N-acetyl-9-O-acetyl-beta-neuraminate + CoA. It carries out the reaction a ganglioside GD3 (d18:1(4E)) + acetyl-CoA = a ganglioside Ac-O-7-GD3(d18:1(4E)) + CoA. It catalyses the reaction CMP-N-acetyl-beta-neuraminate + acetyl-CoA = CMP-N-acetyl-7-O-acetyl-beta-neuraminate + CoA. Key enzyme in the biosynthesis of O-acetylated (O-Ac) sialoglycans such as gangliosides O-AcGD3 and O-AcGD2, which affect various processes such as cell-cell interactions, host-pathogen recognition. Catalyzes the transfer of an acetyl group from a donor, the acetyl-coenzyme-A molecule (acetyl-CoA), to the C7/8/9 OH-position of a sialic acid residue. The primary site of O-acetyl group transfer on sialic acid seems to depend on cell type and can be C7, from which the O-acetyl group could subsequently migrate to the C8 and then to the C9 position, or at C9 with possibility of migrating to the C8 and then to the C7 position. Together with ST8SIA1 (GD3 synthase) it increases the levels of ganglioside Ac-O-7-GD3. Can transfer the acetyl group from acetyl-CoA to free sialate (N-acetylneuraminate, Neu5Ac) in vitro, but has preferred substrate specificity for CMP-activated sialate (CMP-Neu5Ac), resulting in the formation of 9-O-acetylated CMP-Neu5Ac (CMP-Neu5,9Ac2). CMP-Neu5,9Ac2 may be used by sialyltransferases as a sialate donor for glycoconjugate acceptors such as ganglioside GD3. O-acetylation at position C9 of ganglioside GD3 can counteract the pro-apoptotic effects of the ganglioside GD3 in tumor cells. The chain is N-acetylneuraminate (7)9-O-acetyltransferase from Homo sapiens (Human).